Consider the following 221-residue polypeptide: Ribonuclease T (221 aa).

One can recognise an Exonuclease domain in the interval 20–196; sequence VVVDLETGGF…YDTERTAELF (177 aa). 4 residues coordinate Mg(2+): Asp-23, Glu-25, His-183, and Asp-188. The active-site Proton donor/acceptor is His-183.

This sequence belongs to the RNase T family. Homodimer. It depends on Mg(2+) as a cofactor.

In terms of biological role, trims short 3' overhangs of a variety of RNA species, leaving a one or two nucleotide 3' overhang. Responsible for the end-turnover of tRNA: specifically removes the terminal AMP residue from uncharged tRNA (tRNA-C-C-A). Also appears to be involved in tRNA biosynthesis. The sequence is that of Ribonuclease T from Chromohalobacter salexigens (strain ATCC BAA-138 / DSM 3043 / CIP 106854 / NCIMB 13768 / 1H11).